The sequence spans 152 residues: Superoxide dismutase [Cu-Zn] 2 (152 aa).

3 residues coordinate Cu cation: His-45, His-47, and His-62. The disordered stretch occupies residues 53–81 (TNGSMSTGPHFNPDGKQHGAPEDANRHAG). 4 residues coordinate Zn(2+): His-62, His-70, His-79, and Asp-82. The span at 65 to 81 (PDGKQHGAPEDANRHAG) shows a compositional bias: basic and acidic residues. His-119 is a Cu cation binding site.

The protein belongs to the Cu-Zn superoxide dismutase family. As to quaternary structure, homodimer. Cu cation is required as a cofactor. Zn(2+) serves as cofactor.

Its subcellular location is the cytoplasm. It carries out the reaction 2 superoxide + 2 H(+) = H2O2 + O2. In terms of biological role, destroys radicals which are normally produced within the cells and which are toxic to biological systems. The chain is Superoxide dismutase [Cu-Zn] 2 (SODCC2) from Brassica juncea (Indian mustard).